Reading from the N-terminus, the 289-residue chain is Cytochrome bc1 complex cytochrome c subunit (289 aa).

The span at M1–R11 shows a compositional bias: basic residues. Residues M1 to R28 form a disordered region. Residues G37–T55 traverse the membrane as a helical segment. Cytochrome c domains follow at residues A69–G149 and T170–I248. Residues C82, C85, H86, C183, C186, and H187 each coordinate heme c. A helical membrane pass occupies residues G267–A287.

As to quaternary structure, the cytochrome bc1 complex is composed of a cytochrome b (QcrB), the Rieske iron-sulfur protein (QcrA) and a diheme cytochrome c (QcrC) subunit. Binds 2 heme c groups covalently per subunit.

It is found in the cell membrane. The catalysed reaction is a quinol + 2 Fe(III)-[cytochrome c](out) = a quinone + 2 Fe(II)-[cytochrome c](out) + 2 H(+)(out). In terms of biological role, cytochrome b subunit of the cytochrome bc1 complex, an essential component of the respiratory electron transport chain required for ATP synthesis. The bc1 complex catalyzes the oxidation of ubiquinol and the reduction of cytochrome c in the respiratory chain. The bc1 complex operates through a Q-cycle mechanism that couples electron transfer to generation of the proton gradient that drives ATP synthesis. The sequence is that of Cytochrome bc1 complex cytochrome c subunit (qcrC) from Mycobacterium leprae (strain TN).